Here is a 407-residue protein sequence, read N- to C-terminus: 1-deoxy-D-xylulose 5-phosphate reductoisomerase (407 aa).

Residues T10, G11, S12, I13, G36, and N131 each contribute to the NADPH site. Residue K132 coordinates 1-deoxy-D-xylulose 5-phosphate. Position 133 (E133) interacts with NADPH. D155 lines the Mn(2+) pocket. Residues S156, E157, S181, and H204 each coordinate 1-deoxy-D-xylulose 5-phosphate. Position 157 (E157) interacts with Mn(2+). G210 lines the NADPH pocket. The 1-deoxy-D-xylulose 5-phosphate site is built by S217, N222, K223, and E226. E226 contacts Mn(2+).

This sequence belongs to the DXR family. Requires Mg(2+) as cofactor. Mn(2+) is required as a cofactor.

The catalysed reaction is 2-C-methyl-D-erythritol 4-phosphate + NADP(+) = 1-deoxy-D-xylulose 5-phosphate + NADPH + H(+). It participates in isoprenoid biosynthesis; isopentenyl diphosphate biosynthesis via DXP pathway; isopentenyl diphosphate from 1-deoxy-D-xylulose 5-phosphate: step 1/6. Catalyzes the NADPH-dependent rearrangement and reduction of 1-deoxy-D-xylulose-5-phosphate (DXP) to 2-C-methyl-D-erythritol 4-phosphate (MEP). This Cutibacterium acnes (strain DSM 16379 / KPA171202) (Propionibacterium acnes) protein is 1-deoxy-D-xylulose 5-phosphate reductoisomerase.